The sequence spans 421 residues: Alpha-1-antitrypsin-related protein (421 aa).

A signal peptide spans 1-21; that stretch reads MPFSVSWGILLLAGLCCLVPS. N-linked (GlcNAc...) asparagine glycans are attached at residues N56, N110, N148, and N274.

Belongs to the serpin family. As to quaternary structure, interacts with CANX and PDIA3. Post-translationally, glycosylated. As to expression, expressed in the liver, leukocytes and testis. Also detected in brain, colon, uterus, esophagus, spleen, trachea, kidney and lung.

It is found in the endoplasmic reticulum. Its function is as follows. Putative serine protease inhibitor. The polypeptide is Alpha-1-antitrypsin-related protein (SERPINA2) (Homo sapiens (Human)).